The primary structure comprises 83 residues: Conotoxin MiEr92 (83 aa).

The first 22 residues, 1 to 22 (MKLTCVLIVIMLFLTVCPLITA), serve as a signal peptide directing secretion. A propeptide spanning residues 23–49 (DHSRDKQEHPAMRLKDRIRYLRRGKLT) is cleaved from the precursor. Disulfide bonds link Cys52–Cys67, Cys59–Cys72, and Cys66–Cys81.

Belongs to the conotoxin O1 superfamily. In terms of tissue distribution, expressed by the venom duct.

It is found in the secreted. The chain is Conotoxin MiEr92 from Conus miles (Soldier cone).